We begin with the raw amino-acid sequence, 200 residues long: Ubiquitin-conjugating enzyme E2 K (200 aa).

Ala-2 carries the N-acetylalanine modification. The UBC core domain maps to Ile-4–Gly-154. Lys-14 is subject to N6-acetyllysine; alternate. A Glycyl lysine isopeptide (Lys-Gly) (interchain with G-Cter in SUMO); alternate cross-link involves residue Lys-14. Lys-14 is covalently cross-linked (Glycyl lysine isopeptide (Lys-Gly) (interchain with G-Cter in SUMO1); alternate). Cys-92 serves as the catalytic Glycyl thioester intermediate. Ser-159 bears the Phosphoserine mark. The UBA domain occupies Pro-160–Asn-200.

This sequence belongs to the ubiquitin-conjugating enzyme family. In terms of assembly, interacts with RNF138/NARF. Interacts with BRCA1. In terms of processing, sumoylation at Lys-14 impairs catalytic activity.

Its subcellular location is the cytoplasm. It carries out the reaction S-ubiquitinyl-[E1 ubiquitin-activating enzyme]-L-cysteine + [E2 ubiquitin-conjugating enzyme]-L-cysteine = [E1 ubiquitin-activating enzyme]-L-cysteine + S-ubiquitinyl-[E2 ubiquitin-conjugating enzyme]-L-cysteine.. The protein operates within protein modification; protein ubiquitination. Functionally, accepts ubiquitin from the E1 complex and catalyzes its covalent attachment to other proteins. In vitro, in the presence or in the absence of BRCA1-BARD1 E3 ubiquitin-protein ligase complex, catalyzes the synthesis of 'Lys-48'-linked polyubiquitin chains. Does not transfer ubiquitin directly to but elongates monoubiquitinated substrate protein. Mediates the selective degradation of short-lived and abnormal proteins, such as the endoplasmic reticulum-associated degradation (ERAD) of misfolded lumenal proteins. Ubiquitinates huntingtin. May mediate foam cell formation by the suppression of apoptosis of lipid-bearing macrophages through ubiquitination and subsequence degradation of p53/TP53. Proposed to be involved in ubiquitination and proteolytic processing of NF-kappa-B; in vitro supports ubiquitination of NFKB1. The protein is Ubiquitin-conjugating enzyme E2 K (UBE2K) of Bos taurus (Bovine).